The primary structure comprises 237 residues: MNRPGFPRFSVLIASLCGITLLSGCVAPTAKPNDPYYAPVLPRTPMSAASNNGAIYQAGFEQNLYGDRKAFRVGDIITITLSERMAASKAATSAMSKDSTNSIGLTSLFGSGLTTNNPIGGNDLSLSAGYNGARTTKGDGKAAQSNSLTGSVTVTVADVLPNGILSVRGEKWMTLNTGDELVRIAGLVRADDIATDNTVSSTRIADARITYSGTGAFADTSQPGWFDRFFLSPLFPF.

Positions 1–24 (MNRPGFPRFSVLIASLCGITLLSG) are cleaved as a signal peptide. A lipid anchor (N-palmitoyl cysteine) is attached at Cys-25. Cys-25 carries S-diacylglycerol cysteine lipidation.

The protein belongs to the FlgH family. The basal body constitutes a major portion of the flagellar organelle and consists of four rings (L,P,S, and M) mounted on a central rod.

The protein resides in the cell outer membrane. It localises to the bacterial flagellum basal body. Functionally, assembles around the rod to form the L-ring and probably protects the motor/basal body from shearing forces during rotation. The protein is Flagellar L-ring protein of Pseudomonas syringae pv. tomato (strain ATCC BAA-871 / DC3000).